The chain runs to 249 residues: Granaticin polyketide synthase putative ketoacyl reductase 2 (249 aa).

Residue 12 to 36 coordinates NAD(+); the sequence is LVTGSSSGIGQTVAQRLAAEGYRVV. Ser-144 serves as a coordination point for substrate. Catalysis depends on Tyr-157, which acts as the Proton acceptor.

It belongs to the short-chain dehydrogenases/reductases (SDR) family.

It participates in antibiotic biosynthesis; granaticin biosynthesis. The polypeptide is Granaticin polyketide synthase putative ketoacyl reductase 2 (gra-orf6) (Streptomyces violaceoruber).